A 299-amino-acid polypeptide reads, in one-letter code: Myozenin-1 (299 aa).

Positions 1–34 (MPLSGTPAPNKKRKSSKLIMELTGGGQESSGLNL) are disordered. Ser-82 carries the post-translational modification Phosphoserine. The segment at 102–174 (GQGFSYSKSN…TGSGDQAGGE (73 aa)) is disordered. Gly residues-rich tracts occupy residues 112–125 (GRGGSQAGGSGSAG) and 137–173 (SGSGAGGTGGPAGQAGRGGAAGTAGVGETGSGDQAGG).

Belongs to the myozenin family. As to quaternary structure, interacts with ACTN2, ACTN3, FLNA, FLNB, FLNC, LDB3, PPP3CA and TCAP. Interacts via its C-terminal region with MYOT. Expressed primarily in skeletal muscle. Detected at lower levels in heart, prostate and pancreas.

Its subcellular location is the nucleus. It is found in the cell projection. The protein resides in the pseudopodium. Its function is as follows. Myozenins may serve as intracellular binding proteins involved in linking Z-disk proteins such as alpha-actinin, gamma-filamin, TCAP/telethonin, LDB3/ZASP and localizing calcineurin signaling to the sarcomere. Plays an important role in the modulation of calcineurin signaling. May play a role in myofibrillogenesis. In Homo sapiens (Human), this protein is Myozenin-1.